Reading from the N-terminus, the 215-residue chain is Cytochrome b6 (215 aa).

Residues 32–52 (IFYCLGGITLTCFLVQVATGF) form a helical membrane-spanning segment. Cysteine 35 contacts heme c. Residues histidine 86 and histidine 100 each contribute to the heme b site. 3 consecutive transmembrane segments (helical) span residues 90–110 (ASMM…TGGF), 116–136 (LTWV…VTGY), and 186–206 (LHTF…FLMI). Heme b contacts are provided by histidine 187 and histidine 202.

Belongs to the cytochrome b family. PetB subfamily. As to quaternary structure, the 4 large subunits of the cytochrome b6-f complex are cytochrome b6, subunit IV (17 kDa polypeptide, PetD), cytochrome f and the Rieske protein, while the 4 small subunits are PetG, PetL, PetM and PetN. The complex functions as a dimer. It depends on heme b as a cofactor. Requires heme c as cofactor.

Its subcellular location is the plastid. It is found in the chloroplast thylakoid membrane. Component of the cytochrome b6-f complex, which mediates electron transfer between photosystem II (PSII) and photosystem I (PSI), cyclic electron flow around PSI, and state transitions. This is Cytochrome b6 from Pinus koraiensis (Korean pine).